Here is a 359-residue protein sequence, read N- to C-terminus: Protein RecA (359 aa).

77–84 contributes to the ATP binding site; the sequence is GPESSGKT.

This sequence belongs to the RecA family.

Its subcellular location is the cytoplasm. Its function is as follows. Can catalyze the hydrolysis of ATP in the presence of single-stranded DNA, the ATP-dependent uptake of single-stranded DNA by duplex DNA, and the ATP-dependent hybridization of homologous single-stranded DNAs. It interacts with LexA causing its activation and leading to its autocatalytic cleavage. This Paramagnetospirillum magneticum (strain ATCC 700264 / AMB-1) (Magnetospirillum magneticum) protein is Protein RecA.